The following is a 469-amino-acid chain: Probable glycine dehydrogenase (decarboxylating) subunit 1 (469 aa).

It belongs to the GcvP family. N-terminal subunit subfamily. The glycine cleavage system is composed of four proteins: P, T, L and H. In this organism, the P 'protein' is a heterodimer of two subunits.

It carries out the reaction N(6)-[(R)-lipoyl]-L-lysyl-[glycine-cleavage complex H protein] + glycine + H(+) = N(6)-[(R)-S(8)-aminomethyldihydrolipoyl]-L-lysyl-[glycine-cleavage complex H protein] + CO2. The glycine cleavage system catalyzes the degradation of glycine. The P protein binds the alpha-amino group of glycine through its pyridoxal phosphate cofactor; CO(2) is released and the remaining methylamine moiety is then transferred to the lipoamide cofactor of the H protein. This Staphylothermus marinus (strain ATCC 43588 / DSM 3639 / JCM 9404 / F1) protein is Probable glycine dehydrogenase (decarboxylating) subunit 1.